The primary structure comprises 110 residues: UPF0122 protein Aflv_1766 (110 aa).

Belongs to the UPF0122 family.

Functionally, might take part in the signal recognition particle (SRP) pathway. This is inferred from the conservation of its genetic proximity to ftsY/ffh. May be a regulatory protein. In Anoxybacillus flavithermus (strain DSM 21510 / WK1), this protein is UPF0122 protein Aflv_1766.